Reading from the N-terminus, the 512-residue chain is ATP synthase subunit alpha (512 aa).

170–177 (GDRQTGKT) serves as a coordination point for ATP.

It belongs to the ATPase alpha/beta chains family. As to quaternary structure, F-type ATPases have 2 components, CF(1) - the catalytic core - and CF(0) - the membrane proton channel. CF(1) has five subunits: alpha(3), beta(3), gamma(1), delta(1), epsilon(1). CF(0) has three main subunits: a(1), b(2) and c(9-12). The alpha and beta chains form an alternating ring which encloses part of the gamma chain. CF(1) is attached to CF(0) by a central stalk formed by the gamma and epsilon chains, while a peripheral stalk is formed by the delta and b chains.

The protein localises to the cell inner membrane. The catalysed reaction is ATP + H2O + 4 H(+)(in) = ADP + phosphate + 5 H(+)(out). In terms of biological role, produces ATP from ADP in the presence of a proton gradient across the membrane. The alpha chain is a regulatory subunit. This chain is ATP synthase subunit alpha, found in Solibacter usitatus (strain Ellin6076).